Consider the following 146-residue polypeptide: Snaclec coagulation factor IX/factor X-binding protein subunit B (146 aa).

Positions 1–23 (MGRFIFLSFGLLVVFLSLSGTGA) are cleaved as a signal peptide. Intrachain disulfides connect Cys-25-Cys-36, Cys-53-Cys-142, and Cys-119-Cys-134. The C-type lectin domain occupies 32–143 (YEGHCYKPFN…CRMEAYFVCE (112 aa)). Residues Ser-64 and Glu-70 each contribute to the Ca(2+) site. Glu-143 provides a ligand contact to Ca(2+).

It belongs to the snaclec family. Heterodimer with subunit A of IX/X-bp or IX-bp; disulfide-linked. As to expression, expressed by the venom gland.

Its subcellular location is the secreted. When linked to subunit A of IX/X-bp, anticoagulant protein which binds to the gamma-carboxyglutamic acid-domain regions of factors IX (F9) and factor X (F10) in the presence of calcium with a 1 to 1 stoichiometry. In terms of biological role, when linked to subunit A of IX-bp, anticoagulant protein which binds to the gamma-carboxyglutamic acid-domain regions of factor IX (but not to factor X) in the presence of calcium with a 1 to 1 stoichiometry. The protein is Snaclec coagulation factor IX/factor X-binding protein subunit B of Gloydius halys (Chinese water mocassin).